The sequence spans 214 residues: Ribonuclease P protein component 3 (214 aa).

It belongs to the eukaryotic/archaeal RNase P protein component 3 family. In terms of assembly, consists of a catalytic RNA component and at least 4-5 protein subunits.

It localises to the cytoplasm. It catalyses the reaction Endonucleolytic cleavage of RNA, removing 5'-extranucleotides from tRNA precursor.. Functionally, part of ribonuclease P, a protein complex that generates mature tRNA molecules by cleaving their 5'-ends. The sequence is that of Ribonuclease P protein component 3 from Thermococcus gammatolerans (strain DSM 15229 / JCM 11827 / EJ3).